Consider the following 306-residue polypeptide: Glutathione transport system permease protein GsiC (306 aa).

Residues 1-8 (MLNYVLKR) lie on the Cytoplasmic side of the membrane. A helical membrane pass occupies residues 9–29 (LLGLIPTLLIVAVLVFLFVHL). At 30–102 (LPGDPARLIA…SRFLPTLWLT (73 aa)) the chain is on the periplasmic side. The region spanning 95–292 (FLPTLWLTIT…LEFILINLVV (198 aa)) is the ABC transmembrane type-1 domain. The chain crosses the membrane as a helical span at residues 103 to 123 (ITSMIWAVLFGMAIGIAAAVW). Residues 124-134 (RNRWPDRVGMT) are Cytoplasmic-facing. A helical membrane pass occupies residues 135–155 (LAVTGISFPAFALGMLLMQIF). Topologically, residues 156-168 (SVDLGWLPTVGAD) are periplasmic. A helical transmembrane segment spans residues 169–189 (SWQHYILPSLTLGAAVASVMA). Residues 190–228 (RFTRSSFVDVLSEDYMRTARAKGVSETWVVLKHGLRNAM) are Cytoplasmic-facing. Residues 229–249 (IPVVTMMGLQFGFLLGGSIVV) traverse the membrane as a helical segment. Over 250–278 (EKVFNWPGLGRLLVDSVDMRDYPVIQAEV) the chain is Periplasmic. The helical transmembrane segment at 279–299 (LLFSLEFILINLVVDVLYAAI) threads the bilayer. Residues 300–306 (NPAIRYK) lie on the Cytoplasmic side of the membrane.

This sequence belongs to the binding-protein-dependent transport system permease family. The complex is composed of two ATP-binding proteins (GsiA), two transmembrane proteins (GsiC and GsiD) and a solute-binding protein (GsiB).

The protein localises to the cell inner membrane. Functionally, part of the ABC transporter complex GsiABCD involved in glutathione import. Probably responsible for the translocation of the substrate across the membrane. This chain is Glutathione transport system permease protein GsiC, found in Salmonella choleraesuis (strain SC-B67).